The sequence spans 69 residues: Large ribosomal subunit protein bL31 (69 aa).

Zn(2+)-binding residues include cysteine 16, cysteine 18, cysteine 36, and cysteine 39.

The protein belongs to the bacterial ribosomal protein bL31 family. Type A subfamily. As to quaternary structure, part of the 50S ribosomal subunit. It depends on Zn(2+) as a cofactor.

Binds the 23S rRNA. This chain is Large ribosomal subunit protein bL31, found in Thermosipho africanus (strain TCF52B).